Consider the following 408-residue polypeptide: LL-diaminopimelate aminotransferase (408 aa).

Residues Tyr-15 and Gly-42 each coordinate substrate. Residues Tyr-72, Ser-108–Lys-109, Tyr-132, Asn-187, Tyr-218, and Ser-246–Ser-248 each bind pyridoxal 5'-phosphate. 3 residues coordinate substrate: Lys-109, Tyr-132, and Asn-187. N6-(pyridoxal phosphate)lysine is present on Lys-249. Positions 257 and 292 each coordinate pyridoxal 5'-phosphate. Asn-292 and Arg-388 together coordinate substrate.

It belongs to the class-I pyridoxal-phosphate-dependent aminotransferase family. LL-diaminopimelate aminotransferase subfamily. As to quaternary structure, homodimer. It depends on pyridoxal 5'-phosphate as a cofactor.

The enzyme catalyses (2S,6S)-2,6-diaminopimelate + 2-oxoglutarate = (S)-2,3,4,5-tetrahydrodipicolinate + L-glutamate + H2O + H(+). It participates in amino-acid biosynthesis; L-lysine biosynthesis via DAP pathway; LL-2,6-diaminopimelate from (S)-tetrahydrodipicolinate (aminotransferase route): step 1/1. Involved in the synthesis of meso-diaminopimelate (m-DAP or DL-DAP), required for both lysine and peptidoglycan biosynthesis. Catalyzes the direct conversion of tetrahydrodipicolinate to LL-diaminopimelate. This chain is LL-diaminopimelate aminotransferase, found in Leptospira borgpetersenii serovar Hardjo-bovis (strain JB197).